The following is a 344-amino-acid chain: Ribosomal RNA large subunit methyltransferase Cfr (344 aa).

Residue Glu88 is the Proton acceptor of the active site. The region spanning 95-324 (KKGWESFCIS…HANGISVATR (230 aa)) is the Radical SAM core domain. Cysteines 102 and 335 form a disulfide. Residues Cys109, Cys113, and Cys116 each contribute to the [4Fe-4S] cluster site. Residues 155–156 (GE), Ser186, 209–211 (SLH), and Asn290 contribute to the S-adenosyl-L-methionine site. The active-site S-methylcysteine intermediate is the Cys335.

It belongs to the radical SAM superfamily. RlmN family. Cfr subfamily. It depends on [4Fe-4S] cluster as a cofactor.

It is found in the cytoplasm. It carries out the reaction adenosine(2503) in 23S rRNA + 2 reduced [2Fe-2S]-[ferredoxin] + 2 S-adenosyl-L-methionine = 8-methyladenosine(2503) in 23S rRNA + 5'-deoxyadenosine + L-methionine + 2 oxidized [2Fe-2S]-[ferredoxin] + S-adenosyl-L-homocysteine. Specifically methylates position 8 of adenine 2503 in 23S rRNA. Confers resistance to some classes of antibiotics. The protein is Ribosomal RNA large subunit methyltransferase Cfr of Lachnoclostridium phytofermentans (strain ATCC 700394 / DSM 18823 / ISDg) (Clostridium phytofermentans).